Here is a 1401-residue protein sequence, read N- to C-terminus: DNA-directed RNA polymerase subunit beta' (1401 aa).

Positions 70, 72, 85, and 88 each coordinate Zn(2+). D460, D462, and D464 together coordinate Mg(2+). Positions 814, 888, 895, and 898 each coordinate Zn(2+). The tract at residues 1369–1388 is disordered; that stretch reads RQKQKAVEQEGPSAEQATDN.

This sequence belongs to the RNA polymerase beta' chain family. In terms of assembly, the RNAP catalytic core consists of 2 alpha, 1 beta, 1 beta' and 1 omega subunit. When a sigma factor is associated with the core the holoenzyme is formed, which can initiate transcription. It depends on Mg(2+) as a cofactor. Zn(2+) is required as a cofactor.

The catalysed reaction is RNA(n) + a ribonucleoside 5'-triphosphate = RNA(n+1) + diphosphate. DNA-dependent RNA polymerase catalyzes the transcription of DNA into RNA using the four ribonucleoside triphosphates as substrates. This Aliivibrio fischeri (strain ATCC 700601 / ES114) (Vibrio fischeri) protein is DNA-directed RNA polymerase subunit beta'.